We begin with the raw amino-acid sequence, 209 residues long: Uracil phosphoribosyltransferase (209 aa).

5-phospho-alpha-D-ribose 1-diphosphate is bound by residues arginine 79, arginine 104, and 131–139 (DPMLATGGS). Uracil contacts are provided by residues isoleucine 194 and 199-201 (GDA). Residue aspartate 200 participates in 5-phospho-alpha-D-ribose 1-diphosphate binding.

This sequence belongs to the UPRTase family. Mg(2+) is required as a cofactor.

The catalysed reaction is UMP + diphosphate = 5-phospho-alpha-D-ribose 1-diphosphate + uracil. It participates in pyrimidine metabolism; UMP biosynthesis via salvage pathway; UMP from uracil: step 1/1. Allosterically activated by GTP. Catalyzes the conversion of uracil and 5-phospho-alpha-D-ribose 1-diphosphate (PRPP) to UMP and diphosphate. This chain is Uracil phosphoribosyltransferase, found in Agathobacter rectalis (strain ATCC 33656 / DSM 3377 / JCM 17463 / KCTC 5835 / VPI 0990) (Eubacterium rectale).